Consider the following 122-residue polypeptide: Large ribosomal subunit protein uL14c (122 aa).

The protein belongs to the universal ribosomal protein uL14 family. Part of the 50S ribosomal subunit.

It localises to the plastid. Its subcellular location is the chloroplast. In terms of biological role, binds to 23S rRNA. The polypeptide is Large ribosomal subunit protein uL14c (Chlorokybus atmophyticus (Soil alga)).